The following is a 196-amino-acid chain: Probable inactive nicotinamidase At3g16190 (196 aa).

This sequence belongs to the isochorismatase family.

In terms of biological role, does not possess nicotinamidase activity in vitro. The protein is Probable inactive nicotinamidase At3g16190 of Arabidopsis thaliana (Mouse-ear cress).